Reading from the N-terminus, the 311-residue chain is Methionyl-tRNA formyltransferase (311 aa).

110-113 (SLLP) contributes to the (6S)-5,6,7,8-tetrahydrofolate binding site.

This sequence belongs to the Fmt family.

The enzyme catalyses L-methionyl-tRNA(fMet) + (6R)-10-formyltetrahydrofolate = N-formyl-L-methionyl-tRNA(fMet) + (6S)-5,6,7,8-tetrahydrofolate + H(+). In terms of biological role, attaches a formyl group to the free amino group of methionyl-tRNA(fMet). The formyl group appears to play a dual role in the initiator identity of N-formylmethionyl-tRNA by promoting its recognition by IF2 and preventing the misappropriation of this tRNA by the elongation apparatus. This Streptococcus equi subsp. zooepidemicus (strain H70) protein is Methionyl-tRNA formyltransferase.